The sequence spans 284 residues: Nucleotide-binding protein Sputcn32_0712 (284 aa).

8-15 (GRSGSGKS) is an ATP binding site. 56–59 (DVRN) lines the GTP pocket.

It belongs to the RapZ-like family.

Functionally, displays ATPase and GTPase activities. The protein is Nucleotide-binding protein Sputcn32_0712 of Shewanella putrefaciens (strain CN-32 / ATCC BAA-453).